Consider the following 179-residue polypeptide: ADP-ribosylation factor-like protein 5A (179 aa).

G2 carries the N-myristoyl glycine lipid modification. GTP-binding positions include 23–30 (GLDNAGKT), 66–70 (DIGGQ), 125–128 (NKQD), and A159.

This sequence belongs to the small GTPase superfamily. Arf family.

In terms of biological role, lacks ADP-ribosylation enhancing activity. The polypeptide is ADP-ribosylation factor-like protein 5A (Arl5a) (Mus musculus (Mouse)).